The chain runs to 435 residues: MASEKHFKYVILGGGVAAGYAAREFAKQGVKPGELAIISKEAVAPYERPALSKGYLFPQNAARLPGFHVCVGSGGERLLPEWYSEKGIELILSTEIVKADLASKTLTSAVGATFTYEILIIATGSSVIKLSDFGTQGADSNNILYLREVDDADKLVAAIQAKKGGKAVIVGGGYIGLELSAALKINDFDVTMVFPEPWCMPRLFTADIAAFYESYYTNKGVKIVKGTVAVGFDADANGDVTAVNLKNGSVLEADIVVVGVGGRPLTTLFKGQVAEEKGGIKTDAFFETSVPGVYAVGDVATFPMKMYNELRRVEHVDHARKSAEQAVKAIKGKESGESVVEYDYLPYFYSRSFDLGWQFYGDNVGDTILFGDSDPTSAKPKFGSYWIKDGKVLGAFLEGGSPDENKAIAKVAKTQPPVANIEELKKEGLQFASKI.

FAD-binding positions include 14–17, glutamate 41, arginine 48, lysine 53, isoleucine 96, and 147–148; these read GGVA and RE. NAD(+)-binding positions include 172–178, glutamate 196, arginine 202, and glycine 261; that span reads GGYIGLE. An NADP(+)-binding site is contributed by 174–178; sequence YIGLE. 2 residues coordinate NADP(+): arginine 202 and glycine 261. Aspartate 298 serves as a coordination point for FAD. 314-315 provides a ligand contact to NAD(+); the sequence is EH. Residue 314 to 315 coordinates NADP(+); it reads EH. Valine 316 is an FAD binding site. Arginine 320 contributes to the L-ascorbate binding site. An FAD-binding site is contributed by tyrosine 349. NAD(+) is bound at residue tyrosine 349. Residue tyrosine 349 participates in NADP(+) binding. Arginine 351 provides a ligand contact to L-ascorbate.

The protein belongs to the FAD-dependent oxidoreductase family. Requires FAD as cofactor.

It localises to the cytoplasm. The enzyme catalyses 2 monodehydro-L-ascorbate radical + NADH + H(+) = 2 L-ascorbate + NAD(+). Its function is as follows. Catalyzes the conversion of monodehydroascorbate to ascorbate, oxidizing NADH in the process. Ascorbate is a major antioxidant against reactive oxygen species (ROS) and nitric oxide (NO). Can use NADPH as electron donor, but possesses lower activity compared to NADH as electron donor. In Oryza sativa subsp. japonica (Rice), this protein is Monodehydroascorbate reductase 3, cytosolic.